A 563-amino-acid polypeptide reads, in one-letter code: Arginine--tRNA ligase (563 aa).

The 'HIGH' region motif lies at 122-132; the sequence is PNIAKPMSMGH.

It belongs to the class-I aminoacyl-tRNA synthetase family. Monomer.

It localises to the cytoplasm. It carries out the reaction tRNA(Arg) + L-arginine + ATP = L-arginyl-tRNA(Arg) + AMP + diphosphate. This Levilactobacillus brevis (strain ATCC 367 / BCRC 12310 / CIP 105137 / JCM 1170 / LMG 11437 / NCIMB 947 / NCTC 947) (Lactobacillus brevis) protein is Arginine--tRNA ligase.